The chain runs to 89 residues: Small ribosomal subunit protein uS15 (89 aa).

It belongs to the universal ribosomal protein uS15 family. In terms of assembly, part of the 30S ribosomal subunit. Forms a bridge to the 50S subunit in the 70S ribosome, contacting the 23S rRNA.

In terms of biological role, one of the primary rRNA binding proteins, it binds directly to 16S rRNA where it helps nucleate assembly of the platform of the 30S subunit by binding and bridging several RNA helices of the 16S rRNA. Its function is as follows. Forms an intersubunit bridge (bridge B4) with the 23S rRNA of the 50S subunit in the ribosome. The sequence is that of Small ribosomal subunit protein uS15 from Shewanella halifaxensis (strain HAW-EB4).